The chain runs to 113 residues: Sperm-associated antigen 11B (113 aa).

The first 26 residues, 1–26 (MIPRLLPFFASLLFAALLFPGLSNAS), serve as a signal peptide directing secretion. Cystine bridges form between Cys-80/Cys-108, Cys-87/Cys-101, and Cys-91/Cys-109.

The protein belongs to the beta-defensin family.

The protein resides in the secreted. Its function is as follows. Has antimicrobial activity against E.coli. Plays a role in the defense response in the male reproductive tract, contributing to sperm maturation, storage and protection. This Mus musculus (Mouse) protein is Sperm-associated antigen 11B.